A 160-amino-acid polypeptide reads, in one-letter code: Cyclic pyranopterin monophosphate synthase (160 aa).

Residues Leu-74–His-76 and Met-112–Glu-113 each bind substrate. The active site involves Asp-127.

It belongs to the MoaC family. Homohexamer; trimer of dimers.

The enzyme catalyses (8S)-3',8-cyclo-7,8-dihydroguanosine 5'-triphosphate = cyclic pyranopterin phosphate + diphosphate. It participates in cofactor biosynthesis; molybdopterin biosynthesis. Catalyzes the conversion of (8S)-3',8-cyclo-7,8-dihydroguanosine 5'-triphosphate to cyclic pyranopterin monophosphate (cPMP). In Pelobacter propionicus (strain DSM 2379 / NBRC 103807 / OttBd1), this protein is Cyclic pyranopterin monophosphate synthase.